The chain runs to 547 residues: MAAKDVKFGNDARVKMLKGVNVLADAVKVTLGPKGRNVVLDKAYGAPTITKDGVSVAREIELEDKFENMGAQMVKEVASKANDAAGDGTTTATVLAQAIVNEGLKAVAAGMNPMDLKRGIDKAVVAVVEELKAISKPCETSKEIEQVGTISANSDETVGKLIAQAMEKVGKEGVITVEDGTGLDDALDVVEGMQFDRGYLSPYFINKPEAGTVELENPYIILVDKKISNIREILPVLEAVAKAGKPLLIVAEDIEGEALATLVVNTMRGIVKVAAVKAPGFGDRRKAMLQDIAILTAGTVISEEIGMELEKATLEELGQAKRVVITKDNTTIIDGIGDEAQIKARVAQIRQQIEDSTSDYDKEKLQERVAKLAGGVAVIKVGAATEVAMKEKKDRVDDALHATRAAVEEGIVPGGGVALVRAASKVATTLTGDNEEQNVGIKLALRAMEAPLRQIVTNAGEEASVVARNVKDGNGNYGYNAGTEQYGDMLEMGILDPPKVTRSALQFAASIAGLMITTECMITDLPKEEKLDPAAAMGGMGGMGGMM.

ATP-binding positions include 30–33 (TLGP), K51, 87–91 (DGTTT), G415, and D496.

This sequence belongs to the chaperonin (HSP60) family. In terms of assembly, forms a cylinder of 14 subunits composed of two heptameric rings stacked back-to-back. Interacts with the co-chaperonin GroES.

It localises to the cytoplasm. The catalysed reaction is ATP + H2O + a folded polypeptide = ADP + phosphate + an unfolded polypeptide.. Together with its co-chaperonin GroES, plays an essential role in assisting protein folding. The GroEL-GroES system forms a nano-cage that allows encapsulation of the non-native substrate proteins and provides a physical environment optimized to promote and accelerate protein folding. The polypeptide is Chaperonin GroEL (Actinobacillus pleuropneumoniae (Haemophilus pleuropneumoniae)).